Here is a 246-residue protein sequence, read N- to C-terminus: Thiamine import ATP-binding protein ThiQ (246 aa).

Positions 10–239 (VKLDALAFAY…QGPPAFARYL (230 aa)) constitute an ABC transporter domain. 41–48 (GPSGSGKS) contacts ATP.

Belongs to the ABC transporter superfamily. Thiamine importer (TC 3.A.1.19.1) family. The complex is composed of two ATP-binding proteins (ThiQ), two transmembrane proteins (ThiP) and a solute-binding protein (ThiB).

It localises to the cell inner membrane. It carries out the reaction thiamine(out) + ATP + H2O = thiamine(in) + ADP + phosphate + H(+). In terms of biological role, part of the ABC transporter complex ThiBPQ involved in thiamine import. Responsible for energy coupling to the transport system. The polypeptide is Thiamine import ATP-binding protein ThiQ (Chelativorans sp. (strain BNC1)).